The primary structure comprises 133 residues: Transcription antitermination protein NusB (133 aa).

Belongs to the NusB family.

Its function is as follows. Involved in transcription antitermination. Required for transcription of ribosomal RNA (rRNA) genes. Binds specifically to the boxA antiterminator sequence of the ribosomal RNA (rrn) operons. This Clostridium botulinum (strain Alaska E43 / Type E3) protein is Transcription antitermination protein NusB.